The primary structure comprises 374 residues: Isocitrate dehydrogenase [NAD] catalytic subunit 5, mitochondrial (374 aa).

A mitochondrion-targeting transit peptide spans 1-44 (MTMAANLARRLIGNRSTQILGAVNSSSGAASSVARAFCSSTTPI). Arg-127, Arg-137, Arg-158, and Asp-245 together coordinate substrate. The Mg(2+) site is built by Asp-245, Asp-269, and Asp-273.

It belongs to the isocitrate and isopropylmalate dehydrogenases family. As to quaternary structure, heterooligomer of catalytic and regulatory subunits. Mg(2+) serves as cofactor. The cofactor is Mn(2+). Ubiquitous.

The protein resides in the mitochondrion. The enzyme catalyses D-threo-isocitrate + NAD(+) = 2-oxoglutarate + CO2 + NADH. Performs an essential role in the oxidative function of the citric acid cycle. In Arabidopsis thaliana (Mouse-ear cress), this protein is Isocitrate dehydrogenase [NAD] catalytic subunit 5, mitochondrial (IDH5).